Reading from the N-terminus, the 191-residue chain is uncharacterized protein (191 aa).

To B.subtilis GlpP.

This is an uncharacterized protein from Escherichia coli (strain K12).